We begin with the raw amino-acid sequence, 192 residues long: UPF0301 protein BTH_I1462 (192 aa).

Belongs to the UPF0301 (AlgH) family.

In Burkholderia thailandensis (strain ATCC 700388 / DSM 13276 / CCUG 48851 / CIP 106301 / E264), this protein is UPF0301 protein BTH_I1462.